The sequence spans 175 residues: ATP synthase subunit b 1 (175 aa).

A helical membrane pass occupies residues 26–48; the sequence is IINLAIIIGVLYVYGSKFIGNIL.

This sequence belongs to the ATPase B chain family. As to quaternary structure, F-type ATPases have 2 components, F(1) - the catalytic core - and F(0) - the membrane proton channel. F(1) has five subunits: alpha(3), beta(3), gamma(1), delta(1), epsilon(1). F(0) has four main subunits: a(1), b(1), b'(1) and c(10-14). The alpha and beta chains form an alternating ring which encloses part of the gamma chain. F(1) is attached to F(0) by a central stalk formed by the gamma and epsilon chains, while a peripheral stalk is formed by the delta, b and b' chains.

It localises to the cellular thylakoid membrane. Functionally, f(1)F(0) ATP synthase produces ATP from ADP in the presence of a proton or sodium gradient. F-type ATPases consist of two structural domains, F(1) containing the extramembraneous catalytic core and F(0) containing the membrane proton channel, linked together by a central stalk and a peripheral stalk. During catalysis, ATP synthesis in the catalytic domain of F(1) is coupled via a rotary mechanism of the central stalk subunits to proton translocation. In terms of biological role, component of the F(0) channel, it forms part of the peripheral stalk, linking F(1) to F(0). This is ATP synthase subunit b 1 from Picosynechococcus sp. (strain ATCC 27264 / PCC 7002 / PR-6) (Agmenellum quadruplicatum).